Here is a 200-residue protein sequence, read N- to C-terminus: THO complex subunit tho5 (200 aa).

Belongs to the THOC5 family. Component of the THO and TREX complexes.

It localises to the cytoplasm. The protein localises to the nucleus. In terms of biological role, component the THO subcomplex of the TREX complex, which operates in coupling transcription elongation to mRNA export. The THO complex is recruited to transcribed genes and moves along the gene with the elongating polymerase during transcription. THO is important for stabilizing nascent RNA in the RNA polymerase II elongation complex by preventing formation of DNA:RNA hybrids behind the elongating polymerase. The THO complex is also required to maintain TRAMP complex occupancy at sites of snoRNA transcription thus promoting exosome-mediated degradation of snoRNA precursors. This is THO complex subunit tho5 from Schizosaccharomyces pombe (strain 972 / ATCC 24843) (Fission yeast).